The chain runs to 203 residues: Large ribosomal subunit protein bL25 (203 aa).

This sequence belongs to the bacterial ribosomal protein bL25 family. CTC subfamily. In terms of assembly, part of the 50S ribosomal subunit; part of the 5S rRNA/L5/L18/L25 subcomplex. Contacts the 5S rRNA. Binds to the 5S rRNA independently of L5 and L18.

Its function is as follows. This is one of the proteins that binds to the 5S RNA in the ribosome where it forms part of the central protuberance. The sequence is that of Large ribosomal subunit protein bL25 from Wolbachia pipientis wMel.